A 147-amino-acid chain; its full sequence is Large ribosomal subunit protein uL13 (147 aa).

Belongs to the universal ribosomal protein uL13 family. As to quaternary structure, part of the 50S ribosomal subunit.

In terms of biological role, this protein is one of the early assembly proteins of the 50S ribosomal subunit, although it is not seen to bind rRNA by itself. It is important during the early stages of 50S assembly. This Kineococcus radiotolerans (strain ATCC BAA-149 / DSM 14245 / SRS30216) protein is Large ribosomal subunit protein uL13.